A 518-amino-acid chain; its full sequence is 4-trimethylaminobutyraldehyde dehydrogenase B (518 aa).

Residues lysine 204 and 256 to 260 (GSVPT) each bind NAD(+). Glutamate 278 functions as the Proton acceptor in the catalytic mechanism. Cysteine 312 (nucleophile) is an active-site residue. Glutamate 415 serves as a coordination point for NAD(+).

This sequence belongs to the aldehyde dehydrogenase family. Homotetramer.

It localises to the cytoplasm. Its subcellular location is the cytosol. The enzyme catalyses 4-(trimethylamino)butanal + NAD(+) + H2O = 4-(trimethylamino)butanoate + NADH + 2 H(+). It carries out the reaction an aldehyde + NAD(+) + H2O = a carboxylate + NADH + 2 H(+). It functions in the pathway amine and polyamine biosynthesis; carnitine biosynthesis. Its function is as follows. Converts gamma-trimethylaminobutyraldehyde into gamma-butyrobetaine with high efficiency (in vitro). Can catalyze the irreversible oxidation of a broad range of aldehydes to the corresponding acids in an NAD-dependent reaction, but with low efficiency. This is 4-trimethylaminobutyraldehyde dehydrogenase B (aldh9a1b) from Danio rerio (Zebrafish).